Reading from the N-terminus, the 224-residue chain is Orotate phosphoribosyltransferase (224 aa).

5-phospho-alpha-D-ribose 1-diphosphate contacts are provided by residues K26, 73 to 74 (YK), R100, K101, K104, H106, and 127 to 135 (EDVTTAGTS). Residues T131 and R160 each coordinate orotate.

Belongs to the purine/pyrimidine phosphoribosyltransferase family. PyrE subfamily. In terms of assembly, homodimer. The cofactor is Mg(2+).

It catalyses the reaction orotidine 5'-phosphate + diphosphate = orotate + 5-phospho-alpha-D-ribose 1-diphosphate. It functions in the pathway pyrimidine metabolism; UMP biosynthesis via de novo pathway; UMP from orotate: step 1/2. Its function is as follows. Catalyzes the transfer of a ribosyl phosphate group from 5-phosphoribose 1-diphosphate to orotate, leading to the formation of orotidine monophosphate (OMP). The protein is Orotate phosphoribosyltransferase of Clostridium acetobutylicum (strain ATCC 824 / DSM 792 / JCM 1419 / IAM 19013 / LMG 5710 / NBRC 13948 / NRRL B-527 / VKM B-1787 / 2291 / W).